A 224-amino-acid chain; its full sequence is Phosphoribosylformylglycinamidine synthase subunit PurQ (224 aa).

The Glutamine amidotransferase type-1 domain occupies 2 to 224; that stretch reads TVAVVRFGGS…DGQGILGAFA (223 aa). The active-site Nucleophile is the C85. Residues H202 and E204 contribute to the active site.

Part of the FGAM synthase complex composed of 1 PurL, 1 PurQ and 2 PurS subunits.

It is found in the cytoplasm. It catalyses the reaction N(2)-formyl-N(1)-(5-phospho-beta-D-ribosyl)glycinamide + L-glutamine + ATP + H2O = 2-formamido-N(1)-(5-O-phospho-beta-D-ribosyl)acetamidine + L-glutamate + ADP + phosphate + H(+). The catalysed reaction is L-glutamine + H2O = L-glutamate + NH4(+). It participates in purine metabolism; IMP biosynthesis via de novo pathway; 5-amino-1-(5-phospho-D-ribosyl)imidazole from N(2)-formyl-N(1)-(5-phospho-D-ribosyl)glycinamide: step 1/2. In terms of biological role, part of the phosphoribosylformylglycinamidine synthase complex involved in the purines biosynthetic pathway. Catalyzes the ATP-dependent conversion of formylglycinamide ribonucleotide (FGAR) and glutamine to yield formylglycinamidine ribonucleotide (FGAM) and glutamate. The FGAM synthase complex is composed of three subunits. PurQ produces an ammonia molecule by converting glutamine to glutamate. PurL transfers the ammonia molecule to FGAR to form FGAM in an ATP-dependent manner. PurS interacts with PurQ and PurL and is thought to assist in the transfer of the ammonia molecule from PurQ to PurL. In Halobacterium salinarum (strain ATCC 700922 / JCM 11081 / NRC-1) (Halobacterium halobium), this protein is Phosphoribosylformylglycinamidine synthase subunit PurQ.